We begin with the raw amino-acid sequence, 384 residues long: GDP/UDP-N,N'-diacetylbacillosamine 2-epimerase (hydrolyzing) (384 aa).

This sequence belongs to the UDP-N-acetylglucosamine 2-epimerase family.

It carries out the reaction GDP-N,N'-diacetylbacillosamine + H2O = 2,4-diacetamido-2,4,6-trideoxy-alpha-D-mannopyranose + GDP + H(+). The catalysed reaction is UDP-N,N'-diacetylbacillosamine + H2O = 2,4-diacetamido-2,4,6-trideoxy-alpha-D-mannopyranose + UDP + H(+). Its function is as follows. Involved in biosynthesis of legionaminic acid (5,7-diamino-3,5,7,9-tetradeoxy-D-glycero-D-galacto-non-2-ulosonic acid)(Leg), a sialic acid-like derivative that is incorporated into flagellin via O-linkage to Ser/Thr. Catalyzes the conversion of GDP-N,N'-diacetylbacillosamine (Bac2Ac4Ac) into 2,4-diacetamido-2,4,6-trideoxymannose and GDP. It can also use UDP-N,N'-diacetylbacillosamine however it generates small quantities of 2,4-diacetamido-2,4,6-trideoxymannose. This Campylobacter jejuni subsp. jejuni serotype O:2 (strain ATCC 700819 / NCTC 11168) protein is GDP/UDP-N,N'-diacetylbacillosamine 2-epimerase (hydrolyzing) (legG).